Consider the following 443-residue polypeptide: MMTTTVQKNCWRLDQTMLGLEKPGSSDISSSSTDTSAISPISVSSMPLSPDKEKKKISFVRYNPDIPQIVTSFKGYQKLMYQGYRYNIYQIAPERNFKSWRCVCAKKMHDGQWCKCRAETTMDNKNACTKGSHNHPPRHHVAEIEFIKSQLYSAALENPDHDAGDLVNQASMYLSDGVMFDNKESIKKSLVVARNKDGKPKKPRSKRMMKFEVDDDDENEYKMPKLETDISCFLPFINNMVKVEPPFSHTPTIQIPQPIPTPIQHQQQEQSNLLQPATLNGMNNPWMGMEDHLAMIWAANAMLNPGLDVLSTIAALSKHQQHVQGPSPQQAATAPTTASLSSNLSVSSFTPQMPKEASIAIPAPLQVLNLKDLKPLPPLANIQTSPVIQAANLLLPVAALKKDSSTQTTEEIKVSQCLTSGCGCRVIRICCCDEGVCRRTAAC.

The segment at 22 to 49 (KPGSSDISSSSTDTSAISPISVSSMPLS) is disordered. Residues 25 to 42 (SSDISSSSTDTSAISPIS) show a composition bias toward low complexity. Positions 46 to 203 (MPLSPDKEKK…RNKDGKPKKP (158 aa)) form a DNA-binding region, required for DNA-binding. The FLYWCH-type zinc-finger motif lies at 69–135 (IVTSFKGYQK…NACTKGSHNH (67 aa)). Residues 251 to 271 (PTIQIPQPIPTPIQHQQQEQS) form a disordered region.

The protein resides in the nucleus. In terms of biological role, putative transcription factor. Binds to specific sequence motif 5'-[TC][AGT]TGCC[GA][AT]-3' in regulatory elements of target genes such as myosin myo-2. May modulate gene expression, perhaps acting in opposition to transcription factor pha-4. Involved in morphogenesis, perhaps especially in formation of the pharynx. Plays roles in molting, feeding and morphology. The sequence is that of FLYWCH-type zinc finger-containing protein peb-1 from Caenorhabditis elegans.